The primary structure comprises 410 residues: Elongation factor Tu (410 aa).

The tr-type G domain maps to 10–214 (KPHVNIGTIG…EVDAYIPTPE (205 aa)). The G1 stretch occupies residues 19–26 (GHVDHGKT). Residue 19–26 (GHVDHGKT) participates in GTP binding. Thr26 contributes to the Mg(2+) binding site. The interval 60–64 (GITIN) is G2. Residues 81 to 84 (DCPG) form a G3 region. Residues 81-85 (DCPGH) and 136-139 (NKAD) contribute to the GTP site. The interval 136-139 (NKAD) is G4. A G5 region spans residues 174–176 (SAL).

It belongs to the TRAFAC class translation factor GTPase superfamily. Classic translation factor GTPase family. EF-Tu/EF-1A subfamily. As to quaternary structure, monomer.

It localises to the cytoplasm. It catalyses the reaction GTP + H2O = GDP + phosphate + H(+). Functionally, GTP hydrolase that promotes the GTP-dependent binding of aminoacyl-tRNA to the A-site of ribosomes during protein biosynthesis. This is Elongation factor Tu from Arthrospira platensis (Spirulina platensis).